The following is a 367-amino-acid chain: UDP-N-acetylglucosamine--N-acetylmuramyl-(pentapeptide) pyrophosphoryl-undecaprenol N-acetylglucosamine transferase (367 aa).

UDP-N-acetyl-alpha-D-glucosamine contacts are provided by residues 15-17 (TGG), N126, R169, S197, and Q298.

Belongs to the glycosyltransferase 28 family. MurG subfamily.

The protein localises to the cell inner membrane. The catalysed reaction is di-trans,octa-cis-undecaprenyl diphospho-N-acetyl-alpha-D-muramoyl-L-alanyl-D-glutamyl-meso-2,6-diaminopimeloyl-D-alanyl-D-alanine + UDP-N-acetyl-alpha-D-glucosamine = di-trans,octa-cis-undecaprenyl diphospho-[N-acetyl-alpha-D-glucosaminyl-(1-&gt;4)]-N-acetyl-alpha-D-muramoyl-L-alanyl-D-glutamyl-meso-2,6-diaminopimeloyl-D-alanyl-D-alanine + UDP + H(+). It functions in the pathway cell wall biogenesis; peptidoglycan biosynthesis. In terms of biological role, cell wall formation. Catalyzes the transfer of a GlcNAc subunit on undecaprenyl-pyrophosphoryl-MurNAc-pentapeptide (lipid intermediate I) to form undecaprenyl-pyrophosphoryl-MurNAc-(pentapeptide)GlcNAc (lipid intermediate II). This is UDP-N-acetylglucosamine--N-acetylmuramyl-(pentapeptide) pyrophosphoryl-undecaprenol N-acetylglucosamine transferase from Bradyrhizobium sp. (strain BTAi1 / ATCC BAA-1182).